Consider the following 156-residue polypeptide: E3 ubiquitin-protein ligase RNF181 (156 aa).

The RING-type; atypical zinc-finger motif lies at cysteine 79–arginine 120.

It belongs to the RNF181 family.

It catalyses the reaction S-ubiquitinyl-[E2 ubiquitin-conjugating enzyme]-L-cysteine + [acceptor protein]-L-lysine = [E2 ubiquitin-conjugating enzyme]-L-cysteine + N(6)-ubiquitinyl-[acceptor protein]-L-lysine.. It participates in protein modification; protein ubiquitination. Functionally, E3 ubiquitin-protein ligase which accepts ubiquitin from an E2 ubiquitin-conjugating enzyme in the form of a thioester and then directly transfers the ubiquitin to targeted substrates. Catalyzes monoubiquitination of 26S proteasome subunit PSMC2/RPT1. This chain is E3 ubiquitin-protein ligase RNF181 (rnf181), found in Xenopus tropicalis (Western clawed frog).